We begin with the raw amino-acid sequence, 214 residues long: Ras-like protein rasZ (214 aa).

16-23 serves as a coordination point for GTP; the sequence is GDGGVGKT. Residues 38–46 carry the Effector region motif; sequence YDPTIEDSY. GTP contacts are provided by residues 63 to 67 and 122 to 125; these read DTAGQ and NKSD. Cysteine methyl ester is present on cysteine 211. A lipid anchor (S-geranylgeranyl cysteine) is attached at cysteine 211. The propeptide at 212 to 214 is removed in mature form; that stretch reads KMM.

Belongs to the small GTPase superfamily. Ras family.

The protein localises to the cell membrane. The enzyme catalyses GTP + H2O = GDP + phosphate + H(+). Functionally, ras proteins bind GDP/GTP and possess intrinsic GTPase activity. In Dictyostelium discoideum (Social amoeba), this protein is Ras-like protein rasZ (rasZ).